The chain runs to 123 residues: MPTINQLIRKPRAPLVARDKVPALQECPQKRGVCTRVYTTTPKKPNSALRKVARVRLTNGYEVISYIPGEGHNLQEHSVVMIRGGRVKDLPGVRYHIIRGVLDTQGVKDRRQRRSLYGAKRPK.

D89 carries the post-translational modification 3-methylthioaspartic acid.

This sequence belongs to the universal ribosomal protein uS12 family. In terms of assembly, part of the 30S ribosomal subunit. Contacts proteins S8 and S17. May interact with IF1 in the 30S initiation complex.

With S4 and S5 plays an important role in translational accuracy. In terms of biological role, interacts with and stabilizes bases of the 16S rRNA that are involved in tRNA selection in the A site and with the mRNA backbone. Located at the interface of the 30S and 50S subunits, it traverses the body of the 30S subunit contacting proteins on the other side and probably holding the rRNA structure together. The combined cluster of proteins S8, S12 and S17 appears to hold together the shoulder and platform of the 30S subunit. The chain is Small ribosomal subunit protein uS12 from Rhodospirillum centenum (strain ATCC 51521 / SW).